Reading from the N-terminus, the 86-residue chain is Large ribosomal subunit protein bL27 (86 aa).

A disordered region spans residues 1 to 24; sequence MATKKAGGSSRNGRDSAGRRLGVK.

It belongs to the bacterial ribosomal protein bL27 family.

This Rickettsia felis (strain ATCC VR-1525 / URRWXCal2) (Rickettsia azadi) protein is Large ribosomal subunit protein bL27.